Here is a 210-residue protein sequence, read N- to C-terminus: Small ribosomal subunit protein bS6 (210 aa).

The interval 99–210 (PLPTKRNTKS…KDTKEVKEEG (112 aa)) is disordered. The span at 120-210 (NDTKEVKEAK…KDTKEVKEEG (91 aa)) shows a compositional bias: basic and acidic residues.

It belongs to the bacterial ribosomal protein bS6 family.

Binds together with bS18 to 16S ribosomal RNA. The chain is Small ribosomal subunit protein bS6 from Prochlorococcus marinus (strain SARG / CCMP1375 / SS120).